The chain runs to 310 residues: MQPLQIAPCRLLYGLYRGLKSPASTGTRICPAMARPSSNMADFRKLFAKAKHIVIISGAGVSAESGVPTFRGAGGYWRKWQAQDLATPQAFARNPSLVWEFYHYRREVMLSKEPNPGHLAIAECEARLREQGRRVMVITQNIDELHRRAGTKNLLEIHGSLFKTRCTSCGIVAENYKSPICPALSGKGAPDPEAQDARIPVEKLPRCEEAGCGGLLRPHVVWFGENLDPAILEEVDKELTLCDLCLVVGTSSVVYPAAMFAPQVSARGVPVAEFNMETTPATNRFRFHFQGPCGTTLPEALAPHETGNVS.

A mitochondrion-targeting transit peptide spans 1–36 (MQPLQIAPCRLLYGLYRGLKSPASTGTRICPAMARP). One can recognise a Deacetylase sirtuin-type domain in the interval 37 to 307 (SSNMADFRKL…PEALAPHETG (271 aa)). Residue 58 to 77 (GAGVSAESGVPTFRGAGGYW) participates in NAD(+) binding. Substrate contacts are provided by Tyr-102 and Arg-105. 140 to 143 (QNID) contributes to the NAD(+) binding site. His-158 acts as the Proton acceptor in catalysis. The Zn(2+) site is built by Cys-166, Cys-169, Cys-207, and Cys-212. NAD(+)-binding positions include 249 to 251 (GTS), 275 to 277 (NME), and Cys-293.

It belongs to the sirtuin family. Class III subfamily. In terms of assembly, monomer. Homodimer. Interacts with CPS1. Interacts with PCCA. Requires Zn(2+) as cofactor.

The protein localises to the mitochondrion. It is found in the cytoplasm. The protein resides in the cytosol. Its subcellular location is the nucleus. The enzyme catalyses N(6)-malonyl-L-lysyl-[protein] + NAD(+) + H2O = 2''-O-malonyl-ADP-D-ribose + nicotinamide + L-lysyl-[protein]. It catalyses the reaction N(6)-succinyl-L-lysyl-[protein] + NAD(+) + H2O = 2''-O-succinyl-ADP-D-ribose + nicotinamide + L-lysyl-[protein]. The catalysed reaction is N(6)-glutaryl-L-lysyl-[protein] + NAD(+) + H2O = 2''-O-glutaryl-ADP-D-ribose + nicotinamide + L-lysyl-[protein]. In terms of biological role, NAD-dependent lysine demalonylase, desuccinylase and deglutarylase that specifically removes malonyl, succinyl and glutaryl groups on target proteins. Activates CPS1 and contributes to the regulation of blood ammonia levels during prolonged fasting: acts by mediating desuccinylation and deglutarylation of CPS1, thereby increasing CPS1 activity in response to elevated NAD levels during fasting. Activates SOD1 by mediating its desuccinylation, leading to reduced reactive oxygen species. Activates SHMT2 by mediating its desuccinylation. Modulates ketogenesis through the desuccinylation and activation of HMGCS2. Has weak NAD-dependent protein deacetylase activity; however this activity may not be physiologically relevant in vivo. Can deacetylate cytochrome c (CYCS) and a number of other proteins in vitro such as UOX. The polypeptide is NAD-dependent protein deacylase sirtuin-5, mitochondrial (Canis lupus familiaris (Dog)).